We begin with the raw amino-acid sequence, 510 residues long: ATP synthase subunit alpha (510 aa).

Residue 169-176 (GDRQTGKT) participates in ATP binding.

It belongs to the ATPase alpha/beta chains family. F-type ATPases have 2 components, CF(1) - the catalytic core - and CF(0) - the membrane proton channel. CF(1) has five subunits: alpha(3), beta(3), gamma(1), delta(1), epsilon(1). CF(0) has three main subunits: a(1), b(2) and c(9-12). The alpha and beta chains form an alternating ring which encloses part of the gamma chain. CF(1) is attached to CF(0) by a central stalk formed by the gamma and epsilon chains, while a peripheral stalk is formed by the delta and b chains.

The protein resides in the cell inner membrane. The enzyme catalyses ATP + H2O + 4 H(+)(in) = ADP + phosphate + 5 H(+)(out). Produces ATP from ADP in the presence of a proton gradient across the membrane. The alpha chain is a regulatory subunit. This is ATP synthase subunit alpha from Azorhizobium caulinodans (strain ATCC 43989 / DSM 5975 / JCM 20966 / LMG 6465 / NBRC 14845 / NCIMB 13405 / ORS 571).